A 278-amino-acid polypeptide reads, in one-letter code: Hydroxyethylthiazole kinase (278 aa).

M49 lines the substrate pocket. Residues N125 and S171 each contribute to the ATP site. G198 provides a ligand contact to substrate.

This sequence belongs to the Thz kinase family. The cofactor is Mg(2+).

The enzyme catalyses 5-(2-hydroxyethyl)-4-methylthiazole + ATP = 4-methyl-5-(2-phosphooxyethyl)-thiazole + ADP + H(+). It participates in cofactor biosynthesis; thiamine diphosphate biosynthesis; 4-methyl-5-(2-phosphoethyl)-thiazole from 5-(2-hydroxyethyl)-4-methylthiazole: step 1/1. Catalyzes the phosphorylation of the hydroxyl group of 4-methyl-5-beta-hydroxyethylthiazole (THZ). The protein is Hydroxyethylthiazole kinase of Natronomonas pharaonis (strain ATCC 35678 / DSM 2160 / CIP 103997 / JCM 8858 / NBRC 14720 / NCIMB 2260 / Gabara) (Halobacterium pharaonis).